We begin with the raw amino-acid sequence, 347 residues long: UDP-3-O-acylglucosamine N-acyltransferase (347 aa).

The Proton acceptor role is filled by H240.

The protein belongs to the transferase hexapeptide repeat family. LpxD subfamily. In terms of assembly, homotrimer.

It catalyses the reaction a UDP-3-O-[(3R)-3-hydroxyacyl]-alpha-D-glucosamine + a (3R)-hydroxyacyl-[ACP] = a UDP-2-N,3-O-bis[(3R)-3-hydroxyacyl]-alpha-D-glucosamine + holo-[ACP] + H(+). It participates in bacterial outer membrane biogenesis; LPS lipid A biosynthesis. In terms of biological role, catalyzes the N-acylation of UDP-3-O-acylglucosamine using 3-hydroxyacyl-ACP as the acyl donor. Is involved in the biosynthesis of lipid A, a phosphorylated glycolipid that anchors the lipopolysaccharide to the outer membrane of the cell. This chain is UDP-3-O-acylglucosamine N-acyltransferase, found in Hydrogenovibrio crunogenus (strain DSM 25203 / XCL-2) (Thiomicrospira crunogena).